The following is a 1118-amino-acid chain: Cytospin-A (1118 aa).

Residues 1–176 (MKKASRSVGS…SKSKSDNQIS (176 aa)) are disordered. Polar residues predominate over residues 29 to 52 (ESGSSLSAVTKLSKPGTSASLLKT). A compositionally biased stretch (low complexity) spans 79 to 119 (STCASTVSSTTGTTMSTLENKPRTVAGSTARRSTSSGTKES). Composition is skewed to basic and acidic residues over residues 120–131 (SSSRERIRDRSR) and 158–171 (TNPE…KSKS). Residues 193–281 (KTKDVEILHL…LNALGFSLEQ (89 aa)) adopt a coiled-coil conformation. Disordered regions lie at residues 299–324 (ITAG…GSME) and 359–391 (SSDD…NASE). Low complexity predominate over residues 359–373 (SSDDALDAPSSSESE). 2 coiled-coil regions span residues 396 to 450 (CLTE…MESL) and 488 to 808 (RYME…RGRV). 2 disordered regions span residues 856-879 (PSPA…PPAA) and 921-1002 (TSST…RKDP). Low complexity predominate over residues 937–946 (ESAKSISVSR). The segment covering 947–957 (RSSEEIKRDIS) has biased composition (basic and acidic residues). A compositionally biased stretch (low complexity) spans 972-991 (TTSPQLSLSSSPTASVTPTT). The Calponin-homology (CH) domain maps to 1012-1117 (GSKRNALLKW…YVTAIYKYFE (106 aa)).

It belongs to the cytospin-A family. As to quaternary structure, may interact with both microtubules and actin cytoskeleton.

The protein resides in the cytoplasm. It localises to the cytoskeleton. It is found in the spindle. The protein localises to the cell junction. Its subcellular location is the gap junction. Its function is as follows. Involved in cytokinesis and spindle organization. May play a role in actin cytoskeleton organization and microtubule stabilization and hence required for proper cell adhesion and migration. In Gallus gallus (Chicken), this protein is Cytospin-A (SPECC1L).